The chain runs to 95 residues: Sec-independent protein translocase protein TatA (95 aa).

A helical transmembrane segment spans residues 1–21 (MGSMSVWHWVIVAVVVMLLFG). Residues 42 to 95 (GMADDETQPNTATSVPPVGPNDPVRTLPHQGAPGTAPQPPHVQPHVPAGDHKAV) form a disordered region.

The protein belongs to the TatA/E family. The Tat system comprises two distinct complexes: a TatABC complex, containing multiple copies of TatA, TatB and TatC subunits, and a separate TatA complex, containing only TatA subunits. Substrates initially bind to the TatABC complex, which probably triggers association of the separate TatA complex to form the active translocon.

It is found in the cell inner membrane. Functionally, part of the twin-arginine translocation (Tat) system that transports large folded proteins containing a characteristic twin-arginine motif in their signal peptide across membranes. TatA could form the protein-conducting channel of the Tat system. The polypeptide is Sec-independent protein translocase protein TatA (Methylorubrum extorquens (strain PA1) (Methylobacterium extorquens)).